Here is a 764-residue protein sequence, read N- to C-terminus: Thyrotropin receptor (764 aa).

A signal peptide spans 1-20 (MRPPPLLHLALLLALPRSLG). The Extracellular segment spans residues 21-413 (GKGCPSPPCE…EFNPCEDIMG (393 aa)). A disulfide bridge links C31 with C41. 2 N-linked (GlcNAc...) asparagine glycosylation sites follow: N77 and N99. 6 LRR repeats span residues 125–149 (LPLL…KVYS), 150–174 (TDVF…AFQG), 176–199 (CNET…AFNG), 201–223 (KLDA…AFGG), 225–248 (YSGP…GLEH), and 250–271 (KELI…SFLH). N-linked (GlcNAc...) asparagine glycans are attached at residues N177 and N198. N302 carries an N-linked (GlcNAc...) asparagine glycan. Sulfotyrosine is present on Y385. A helical membrane pass occupies residues 414-441 (YKFLRIVVWFVSLLALLGNVFVLIVLLT). Topologically, residues 442-450 (SHYKLTVPR) are cytoplasmic. A helical membrane pass occupies residues 451-473 (FLMCNLAFADFCMGMYLLLIASV). At 474 to 494 (DLYTHSEYYNHAIDWQTGPGC) the chain is on the extracellular side. Residues C494 and C569 are joined by a disulfide bond. The helical transmembrane segment at 495–517 (NTAGFFTVFASELSVYTLTVITL) threads the bilayer. Residues 518–537 (ERWYAITFAMRLDRKIRLRH) lie on the Cytoplasmic side of the membrane. Residues 538–560 (AYAIMVGGWVCCFLLALLPLVGI) form a helical membrane-spanning segment. Over 561–580 (SSYAKVSICLPMDTETPLAL) the chain is Extracellular. A helical membrane pass occupies residues 581-602 (AYIILVLLLNIVAFIIVCSCYV). The Cytoplasmic segment spans residues 603 to 625 (KIYITVRNPQYNPGDKDTKIAKR). The chain crosses the membrane as a helical span at residues 626–649 (MAVLIFTDFMCMAPISFYALSALM). Topologically, residues 650–660 (NKPLITVTNSK) are extracellular. The helical transmembrane segment at 661–682 (ILLVLFYPLNSCANPFLYAIFT) threads the bilayer. Residues 683-764 (KAFQRDVFIL…ISKEYNQTVL (82 aa)) lie on the Cytoplasmic side of the membrane. Residues 762–764 (TVL) carry the PDZ-binding motif.

Belongs to the G-protein coupled receptor 1 family. FSH/LSH/TSH subfamily. Interacts with heterodimer GPHA2:GPHB5; this interaction stimulates cAMP production. Interacts (via the PDZ-binding motif) with SCRIB; regulates TSHR trafficking and function. Glycosylated. In terms of processing, sulfated. Sulfation on Tyr-385 plays a role in thyrotropin receptor binding and activation.

Its subcellular location is the cell membrane. The protein localises to the basolateral cell membrane. Receptor for the thyroid-stimulating hormone (TSH) or thyrotropin. Also acts as a receptor for the heterodimeric glycoprotein hormone (GPHA2:GPHB5) or thyrostimulin. The activity of this receptor is mediated by G proteins which activate adenylate cyclase. Plays a central role in controlling thyroid cell metabolism. The sequence is that of Thyrotropin receptor (TSHR) from Canis lupus familiaris (Dog).